Consider the following 353-residue polypeptide: Protein Wnt-11b-1 (353 aa).

An N-terminal signal peptide occupies residues Met1–Ala22. Residues Asn31, Asn38, and Asn88 are each glycosylated (N-linked (GlcNAc...) asparagine). Disulfide bonds link Cys78/Cys89, Cys128/Cys136, Cys138/Cys155, Cys208/Cys222, and Cys210/Cys217. Ser214 is lipidated: O-palmitoleoyl serine; by PORCN. 2 positions are modified to sulfotyrosine: Tyr274 and Tyr281. Cystine bridges form between Cys282-Cys313, Cys298-Cys308, Cys312-Cys352, Cys328-Cys343, Cys330-Cys340, and Cys335-Cys336. N-linked (GlcNAc...) asparagine glycosylation is present at Asn299.

Belongs to the Wnt family. Homodimer. Secreted homodimers form a complex with wnt5a homodimers; tyrosine sulfation of both wnt11 and wnt5a by tpst1 is required for this interaction. Interacts with the transmembrane receptor fzd7/fz7. Interacts with lrp6 and ryk. Interacts with tdgf1/frl1. Interacts weakly with frzb1 and strongly with frzb2/crescent. Interaction with frzb2/crescent antagonizes wnt11 function in the neuroectoderm, but enhances it in mesodermal tissue. Post-translationally, glycosylation is required for protein secretion. Palmitoleoylation is required for efficient binding to frizzled receptors. Depalmitoleoylation leads to Wnt signaling pathway inhibition.

The protein resides in the secreted. It is found in the extracellular space. It localises to the extracellular matrix. Functionally, ligand for the frizzled7 transmembrane receptor. Primarily acts via non-canonical Wnt pathways mediated by either Ca(2+) and PKC, or by JNK and dvl2/dsh. Depending on the cellular context, can also signal via the canonical Wnt pathway mediated by beta-catenin and dvl2/dsh. May also inhibit canonical Wnt signaling. Maternally initiates dorsal/ventral axis formation by a canonical route, which signals via lrp6. In a complex with wnt5a, activates the canonical and non-canonical processes involved in axis formation. In the non-canonical pathway, acts through fzd7/fz7 to induce phosphorylation of dvl2/dsh. Signals through a non-canonical Wnt pathway to regulate convergent extension movements during gastrulation. Interactions with the secreted Wnt antagonist sfrp5 to coordinate foregut development, acting via a non-canonical wnt pathway whereby sfrp5 restricts wnt11b activity to prevent inappropriate foregut formation. Mediates cardiogenesis via non-canonical Wnt signaling involving JNK-activation and PKC. Acts redundantly with wnt11/wnt11r during pronephros induction. The protein is Protein Wnt-11b-1 of Xenopus tropicalis (Western clawed frog).